The sequence spans 448 residues: Cysteine--tRNA ligase (448 aa).

Cys27 is a Zn(2+) binding site. The short motif at 29–39 (PTVYNYIHVGN) is the 'HIGH' region element. Zn(2+)-binding residues include Cys210, His235, and Glu239. A 'KMSKS' region motif is present at residues 267–271 (KMSKS). Lys270 provides a ligand contact to ATP.

Belongs to the class-I aminoacyl-tRNA synthetase family. In terms of assembly, monomer. The cofactor is Zn(2+).

It is found in the cytoplasm. The enzyme catalyses tRNA(Cys) + L-cysteine + ATP = L-cysteinyl-tRNA(Cys) + AMP + diphosphate. The protein is Cysteine--tRNA ligase of Lactococcus lactis subsp. lactis (strain IL1403) (Streptococcus lactis).